A 351-amino-acid chain; its full sequence is Probable glucuronosyltransferase Os10g0205300 (351 aa).

At 1–11 (MAAPPCPPRRP) the chain is on the cytoplasmic side. A helical; Signal-anchor for type II membrane protein membrane pass occupies residues 12 to 32 (ISAPCFLLCFLLGFVAGLFPF). Over 33 to 351 (AHRHLHLDLH…PLKKEARPLL (319 aa)) the chain is Lumenal. Residues 138 to 169 (SSPVPDAPQDRPRRRGRRQDRPAVDSRARQRN) form a disordered region. Over residues 156–169 (QDRPAVDSRARQRN) the composition is skewed to basic and acidic residues. The N-linked (GlcNAc...) asparagine glycan is linked to N259.

Belongs to the glycosyltransferase 43 family.

Its subcellular location is the golgi apparatus membrane. Functionally, involved in the synthesis of glucuronoxylan hemicellulose in secondary cell walls. The polypeptide is Probable glucuronosyltransferase Os10g0205300 (Oryza sativa subsp. japonica (Rice)).